Here is a 378-residue protein sequence, read N- to C-terminus: MENKKLHIALLFGGNSSEHDVSKRSAHNIYDALDKDKYDVSVFMFTKKGFLLGNKDSMRIFDGENEDDVVTEVIKDVDFSNPLANIQNLAEVKDVDVFYPVIHGNMGEDGTVQGLFRLLNKPWIGSGVASSGVSFDKDLTKKLLTLNGIRNTKYVLVTPENKADYPYAKVAEELGETLFVKPARQGSSVGIHKVRNEEEYNAALEDGFKYDYKILVEEAIKNPREVECSVLGNRDIKASKLGAIRIPESDDFYDYNNKFVDASGVVFEMPIKLPEKLTKEIQQMSLDAFRALDNRGLARMDFLVDKNDVPYFGEVNTLPGFTNISLYPQLWEVSGISYSELIDQLIQLAIDEFNDNAKIHYDFTKLGTEKVGKKIIGE.

The region spanning 141-347 (KKLLTLNGIR…YSELIDQLIQ (207 aa)) is the ATP-grasp domain. 171-226 (AEELGETLFVKPARQGSSVGIHKVRNEEEYNAALEDGFKYDYKILVEEAIKNPREV) contributes to the ATP binding site. Residues D301, E314, and N316 each coordinate Mg(2+).

This sequence belongs to the D-alanine--D-alanine ligase family. Requires Mg(2+) as cofactor. Mn(2+) serves as cofactor.

It is found in the cytoplasm. It catalyses the reaction 2 D-alanine + ATP = D-alanyl-D-alanine + ADP + phosphate + H(+). It participates in cell wall biogenesis; peptidoglycan biosynthesis. Cell wall formation. The chain is D-alanine--D-alanine ligase from Ligilactobacillus salivarius (strain UCC118) (Lactobacillus salivarius).